The sequence spans 355 residues: Ferrochelatase (355 aa).

Fe cation is bound by residues His214 and Glu295.

It belongs to the ferrochelatase family.

The protein resides in the cytoplasm. The catalysed reaction is heme b + 2 H(+) = protoporphyrin IX + Fe(2+). It functions in the pathway porphyrin-containing compound metabolism; protoheme biosynthesis; protoheme from protoporphyrin-IX: step 1/1. Its function is as follows. Catalyzes the ferrous insertion into protoporphyrin IX. This is Ferrochelatase from Burkholderia thailandensis (strain ATCC 700388 / DSM 13276 / CCUG 48851 / CIP 106301 / E264).